A 682-amino-acid polypeptide reads, in one-letter code: MNMFFRLTALAGLLAIAGQTFAVEDITRADQIPVLKEETQHATVSERVTSRFTRSHYRQFDLDQAFSAKIFDRYLNLLDYSHNVLLASDVEQFAKKKTELGDELRSGKLDVFYDLYNLAQKRRFERYQYALSVLEKPMDFTGNDTYNLDRSKAPWPKNEAELNALWDSKVKFDELSLKLTGKTDKEIRETLTRRYKFAIRRLAQTNSEDVFSLAMTAFAREIDPHTNYLSPRNTEQFNTEMSLSLEGIGAVLQMDDDYTVINSMVAGGPAAKSKAISVGDKIVGVGQTGKPMVDVIGWRLDDVVALIKGPKGSKVRLEILPAGKGTKTRTVTLTRERIRLEDRAVKMSVKTVGKEKVGVLDIPGFYVGLTDDVKVQLQKLEKQNVSSVIIDLRSNGGGALTEAVSLSGLFIPAGPIVQVRDNNGKVREDSDTDGQVFYKGPLVVLVDRFSASASEIFAAAMQDYGRALVVGEPTFGKGTVQQYRSLNRIYDQMLRPEWPALGSVQYTIQKFYRVNGGSTQRKGVTPDIIMPTGNEETETGEKFEDNALPWDSIDAATYVKSGDLTAFEPELLKEHNARIAKDPEFQNIMKDIARFNAMKDKRNIVSLNYAVREKENNEDDATRLARLNERFKREGKPELKKLDDLPKDYQEPDPYLDETVNIALDLAKLEKARPAEQPAPVK.

A signal peptide spans Met1–Ala22. The region spanning Asn238–Ala322 is the PDZ domain. Catalysis depends on charge relay system residues Ser452, Asp463, and Lys477. A compositionally biased stretch (basic and acidic residues) spans Gly635 to Gln650. The disordered stretch occupies residues Gly635–Pro654.

The protein belongs to the peptidase S41A family.

It localises to the cell inner membrane. It catalyses the reaction The enzyme shows specific recognition of a C-terminal tripeptide, Xaa-Yaa-Zaa, in which Xaa is preferably Ala or Leu, Yaa is preferably Ala or Tyr, and Zaa is preferably Ala, but then cleaves at a variable distance from the C-terminus. A typical cleavage is -Ala-Ala-|-Arg-Ala-Ala-Lys-Glu-Asn-Tyr-Ala-Leu-Ala-Ala.. Involved in the cleavage of a C-terminal peptide of 11 residues from the precursor form of penicillin-binding protein 3 (PBP3). May be involved in protection of the bacterium from thermal and osmotic stresses. The chain is Tail-specific protease (prc) from Escherichia coli (strain K12).